We begin with the raw amino-acid sequence, 379 residues long: MKKHRVVVGLSGGVDSAVTAHLLKQQGHEVVGIFMKNWEDDDDSEFCSSRQDFLDAASVADVIGIEIEHVNFAAEYKDRVFAEFLREYQAGRTPNPDVLCNAEIKFKAFLDHAMRLGAEKIATGHYARVRQNPATGLFELLKGLDPSKDQSYFLHRLNQAQLSKTLFPVGELHKTEVRRIAADIGLPNAKKKDSTGICFIGERPFREFLNRYIQHAPGPILDDRGRKLGRHVGLSFYTLGQRQGLGIGGVKEKGAGAKAPSGQPVRGAGDHAPWFVARKELETNTLRVVQGHEHPWLLSHRLDAQDASWIAGHPPAAGACAAKTRYRQQDAACTVLAAQGDAFNLQFPEAQWAVTPGQSAVLYDGEVCLGGGVIAAVNG.

ATP is bound by residues 9–16 (GLSGGVDS) and Met35. The interval 95–97 (NPD) is interaction with target base in tRNA. Catalysis depends on Cys100, which acts as the Nucleophile. Cys100 and Cys198 are disulfide-bonded. ATP is bound at residue Gly124. An interaction with tRNA region spans residues 148 to 150 (KDQ). The active-site Cysteine persulfide intermediate is Cys198. The segment at 325–326 (RY) is interaction with tRNA.

The protein belongs to the MnmA/TRMU family.

It is found in the cytoplasm. It catalyses the reaction S-sulfanyl-L-cysteinyl-[protein] + uridine(34) in tRNA + AH2 + ATP = 2-thiouridine(34) in tRNA + L-cysteinyl-[protein] + A + AMP + diphosphate + H(+). Its function is as follows. Catalyzes the 2-thiolation of uridine at the wobble position (U34) of tRNA, leading to the formation of s(2)U34. The polypeptide is tRNA-specific 2-thiouridylase MnmA (Acidovorax sp. (strain JS42)).